We begin with the raw amino-acid sequence, 755 residues long: Dolichyl-phosphate-mannose--protein mannosyltransferase 4 (755 aa).

Positions 1–23 (MSQTLKKRGGNSSGRKSPTTSNI) are disordered. Asn-11 carries N-linked (GlcNAc...) asparagine glycosylation. Positions 13–23 (SGRKSPTTSNI) are enriched in polar residues. 6 helical membrane passes run 92-112 (FFDLHPPFAKLLIAFVGWLIG), 147-167 (IVPIMFLTMKTLGFSVAACLF), 185-205 (ILLDATLILSVALTIFSYSKF), 212-232 (SFSSKWWTWLLATGVSLSCVI), 237-257 (VGVFTYLTIGIAVIHELWILL), and 278-298 (ALIIVPFCIYLYWFYLHFAIL). MIR domains lie at 325 to 389 (SKPV…IVPT), 396 to 454 (GTKV…LRLH), and 466 to 523 (KKEI…FDLI). The N-linked (GlcNAc...) asparagine glycan is linked to Asn-445. The next 3 helical transmembrane spans lie at 595–615 (IFFIGNIIGFWLEVCFLSIYI), 640–660 (LYNTLGFLFVGWAAHYLPFFL), and 670–690 (YLPAHLVAALFSGGLVEFICS). Asn-691 carries an N-linked (GlcNAc...) asparagine glycan. Residues 706 to 726 (YKIIAVVAACSTAIIWFFFYF) form a helical membrane-spanning segment.

This sequence belongs to the glycosyltransferase 39 family. In terms of assembly, forms a functional homodimer.

The protein resides in the endoplasmic reticulum membrane. It catalyses the reaction a di-trans,poly-cis-dolichyl beta-D-mannosyl phosphate + L-seryl-[protein] = 3-O-(alpha-D-mannosyl)-L-seryl-[protein] + a di-trans,poly-cis-dolichyl phosphate + H(+). It carries out the reaction a di-trans,poly-cis-dolichyl beta-D-mannosyl phosphate + L-threonyl-[protein] = 3-O-(alpha-D-mannosyl)-L-threonyl-[protein] + a di-trans,poly-cis-dolichyl phosphate + H(+). Its pathway is protein modification; protein glycosylation. Protein mannosyltransferase (PMT) involved in hyphal growth and drug sensitivity. Transfers mannose from Dol-P-mannose to Ser or Thr residues on proteins. PMT1, PMT2 and PMT4 account for most of the protein-O-glycosylation activity, while PMT5 and PMT6 may specifically modulate a much narrower spectrum of target proteins. Accounts for the O-glycosylation of AXL2, responsible for bud site selection, as well as of the SEC20 t-SNARE component. O-glycosylation of SEC20 is essential for its stability. Required for biofilm formation. This chain is Dolichyl-phosphate-mannose--protein mannosyltransferase 4, found in Candida albicans (strain SC5314 / ATCC MYA-2876) (Yeast).